A 271-amino-acid polypeptide reads, in one-letter code: Enolase-phosphatase E1 (271 aa).

Mg(2+) is bound by residues Asp-18 and Glu-20. Residues 144-145 (SS) and Lys-194 contribute to the substrate site. Asp-221 serves as a coordination point for Mg(2+).

This sequence belongs to the HAD-like hydrolase superfamily. MasA/MtnC family. Monomer. The cofactor is Mg(2+).

Its subcellular location is the cytoplasm. It localises to the nucleus. It carries out the reaction 5-methylsulfanyl-2,3-dioxopentyl phosphate + H2O = 1,2-dihydroxy-5-(methylsulfanyl)pent-1-en-3-one + phosphate. It functions in the pathway amino-acid biosynthesis; L-methionine biosynthesis via salvage pathway; L-methionine from S-methyl-5-thio-alpha-D-ribose 1-phosphate: step 3/6. Its pathway is amino-acid biosynthesis; L-methionine biosynthesis via salvage pathway; L-methionine from S-methyl-5-thio-alpha-D-ribose 1-phosphate: step 4/6. Bifunctional enzyme that catalyzes the enolization of 2,3-diketo-5-methylthiopentyl-1-phosphate (DK-MTP-1-P) into the intermediate 2-hydroxy-3-keto-5-methylthiopentenyl-1-phosphate (HK-MTPenyl-1-P), which is then dephosphorylated to form the acireductone 1,2-dihydroxy-3-keto-5-methylthiopentene (DHK-MTPene). This chain is Enolase-phosphatase E1, found in Candida albicans (strain WO-1) (Yeast).